We begin with the raw amino-acid sequence, 169 residues long: Transcription antitermination protein NusB (169 aa).

Belongs to the NusB family.

Functionally, involved in transcription antitermination. Required for transcription of ribosomal RNA (rRNA) genes. Binds specifically to the boxA antiterminator sequence of the ribosomal RNA (rrn) operons. The polypeptide is Transcription antitermination protein NusB (Rhodococcus opacus (strain B4)).